A 436-amino-acid polypeptide reads, in one-letter code: Trigger factor (436 aa).

In terms of domain architecture, PPIase FKBP-type spans 163 to 248; the sequence is GDTVVIDFDG…IHEVKEKQLP (86 aa).

Belongs to the FKBP-type PPIase family. Tig subfamily.

It localises to the cytoplasm. It carries out the reaction [protein]-peptidylproline (omega=180) = [protein]-peptidylproline (omega=0). In terms of biological role, involved in protein export. Acts as a chaperone by maintaining the newly synthesized protein in an open conformation. Functions as a peptidyl-prolyl cis-trans isomerase. The chain is Trigger factor from Levilactobacillus brevis (strain ATCC 367 / BCRC 12310 / CIP 105137 / JCM 1170 / LMG 11437 / NCIMB 947 / NCTC 947) (Lactobacillus brevis).